The following is a 359-amino-acid chain: Phosphate acyltransferase (359 aa).

Belongs to the PlsX family. Homodimer. Probably interacts with PlsY.

The protein localises to the cytoplasm. It carries out the reaction a fatty acyl-[ACP] + phosphate = an acyl phosphate + holo-[ACP]. It participates in lipid metabolism; phospholipid metabolism. Its function is as follows. Catalyzes the reversible formation of acyl-phosphate (acyl-PO(4)) from acyl-[acyl-carrier-protein] (acyl-ACP). This enzyme utilizes acyl-ACP as fatty acyl donor, but not acyl-CoA. The chain is Phosphate acyltransferase from Koribacter versatilis (strain Ellin345).